A 385-amino-acid chain; its full sequence is MLKTQKDKKLENFFSSNNKTKKKKNIIVGLSGGVDSSLSAALLVERGWNVEGLTLWLIKGQGSCCSEGLVDAAGLCEDLGINHKIIDSREIFEREVIKKTTESYEKGFTPLPCSMCNKNVKFEEMLNYAVNKKDFTHIATGHYARIKKSSYAETLDCKSFKFKDFLLLRGADENKDQSYFLYSLSQEVLSRLEFPLGEMKKEETRKEALRLGLRTAQKPESQDLCLVEHYGSMQRFIDKHIEPKEGEIVHVNGKVLGTHNGIQHFTIGQRKGLGIAWPDPLYVKSLDRVKNIVYVADKSDLFNREAIITKVNWVSIEEPKQEIEVEAQIRYRSHPVKGTLIPLKNFDNPTTTFKLIFEESQSSVTPGQAAVFYKGEILLGGGLIS.

Residues 29 to 36 (GLSGGVDS) and leucine 55 contribute to the ATP site. Catalysis depends on cysteine 116, which acts as the Nucleophile. A disulfide bridge connects residues cysteine 116 and cysteine 225. ATP is bound at residue glycine 141. An interaction with tRNA region spans residues 175 to 177 (KDQ). The active-site Cysteine persulfide intermediate is cysteine 225. The interval 330–331 (RY) is interaction with tRNA.

Belongs to the MnmA/TRMU family.

It is found in the cytoplasm. The enzyme catalyses S-sulfanyl-L-cysteinyl-[protein] + uridine(34) in tRNA + AH2 + ATP = 2-thiouridine(34) in tRNA + L-cysteinyl-[protein] + A + AMP + diphosphate + H(+). Its function is as follows. Catalyzes the 2-thiolation of uridine at the wobble position (U34) of tRNA, leading to the formation of s(2)U34. This is tRNA-specific 2-thiouridylase MnmA from Prochlorococcus marinus (strain MIT 9301).